Consider the following 81-residue polypeptide: Small ribosomal subunit protein bS16 (81 aa).

This sequence belongs to the bacterial ribosomal protein bS16 family.

This Clostridium beijerinckii (strain ATCC 51743 / NCIMB 8052) (Clostridium acetobutylicum) protein is Small ribosomal subunit protein bS16.